We begin with the raw amino-acid sequence, 380 residues long: Beta sliding clamp (380 aa).

This sequence belongs to the beta sliding clamp family. Forms a ring-shaped head-to-tail homodimer around DNA which binds and tethers DNA polymerases and other proteins to the DNA. The DNA replisome complex has a single clamp-loading complex (3 tau and 1 each of delta, delta', psi and chi subunits) which binds 3 Pol III cores (1 core on the leading strand and 2 on the lagging strand) each with a beta sliding clamp dimer. Additional proteins in the replisome are other copies of gamma, psi and chi, Ssb, DNA helicase and RNA primase.

It is found in the cytoplasm. Its function is as follows. Confers DNA tethering and processivity to DNA polymerases and other proteins. Acts as a clamp, forming a ring around DNA (a reaction catalyzed by the clamp-loading complex) which diffuses in an ATP-independent manner freely and bidirectionally along dsDNA. Initially characterized for its ability to contact the catalytic subunit of DNA polymerase III (Pol III), a complex, multichain enzyme responsible for most of the replicative synthesis in bacteria; Pol III exhibits 3'-5' exonuclease proofreading activity. The beta chain is required for initiation of replication as well as for processivity of DNA replication. The polypeptide is Beta sliding clamp (dnaN) (Lactococcus lactis subsp. lactis (strain IL1403) (Streptococcus lactis)).